We begin with the raw amino-acid sequence, 386 residues long: Succinate--CoA ligase [ADP-forming] subunit beta (386 aa).

In terms of domain architecture, ATP-grasp spans Lys-9 to Arg-244. Residues Lys-46, Gly-53–Gly-55, Glu-99, Cys-102, and Glu-107 contribute to the ATP site. Asn-199 and Asp-213 together coordinate Mg(2+). Substrate is bound by residues Asn-264 and Gly-321–Met-323.

Belongs to the succinate/malate CoA ligase beta subunit family. As to quaternary structure, heterotetramer of two alpha and two beta subunits. Mg(2+) is required as a cofactor.

The enzyme catalyses succinate + ATP + CoA = succinyl-CoA + ADP + phosphate. The catalysed reaction is GTP + succinate + CoA = succinyl-CoA + GDP + phosphate. It participates in carbohydrate metabolism; tricarboxylic acid cycle; succinate from succinyl-CoA (ligase route): step 1/1. In terms of biological role, succinyl-CoA synthetase functions in the citric acid cycle (TCA), coupling the hydrolysis of succinyl-CoA to the synthesis of either ATP or GTP and thus represents the only step of substrate-level phosphorylation in the TCA. The beta subunit provides nucleotide specificity of the enzyme and binds the substrate succinate, while the binding sites for coenzyme A and phosphate are found in the alpha subunit. The protein is Succinate--CoA ligase [ADP-forming] subunit beta of Rickettsia typhi (strain ATCC VR-144 / Wilmington).